A 519-amino-acid polypeptide reads, in one-letter code: Serine/threonine-protein kinase RIO1 (519 aa).

The span at 1–10 (MTPAPEPQDP) shows a compositional bias: pro residues. The segment at 1–54 (MTPAPEPQDPPTIHEPVATEQTDDISDWDVESDYEDGYGAPSKSQAQGGASAAD) is disordered. Over residues 21–36 (QTDDISDWDVESDYED) the composition is skewed to acidic residues. Positions 39-53 (GAPSKSQAQGGASAA) are enriched in low complexity. The 398-residue stretch at 122–519 (SEIYGTISTG…KLVAANKKRK (398 aa)) folds into the Protein kinase domain. Residues K154 and L228 each contribute to the ATP site. D281 functions as the Proton acceptor in the catalytic mechanism. The Mg(2+) site is built by N286 and D298. The active-site 4-aspartylphosphate intermediate is D298. The tract at residues 418–519 (ADSKVPESTG…KLVAANKKRK (102 aa)) is disordered. Over residues 439–464 (GSEDEEGDEGESGEVESGDEEREEGE) the composition is skewed to acidic residues. Positions 440–519 (SEDEEGDEGE…KLVAANKKRK (80 aa)) are association with (pre-)40S ribosomal particle. Composition is skewed to basic residues over residues 470-489 (KKRP…AHKM) and 497-519 (EKRK…KKRK).

This sequence belongs to the protein kinase superfamily. RIO-type Ser/Thr kinase family. It depends on Mg(2+) as a cofactor. In terms of processing, autophosphorylated.

The protein localises to the cytoplasm. It carries out the reaction L-seryl-[protein] + ATP = O-phospho-L-seryl-[protein] + ADP + H(+). The enzyme catalyses L-threonyl-[protein] + ATP = O-phospho-L-threonyl-[protein] + ADP + H(+). The catalysed reaction is ATP + H2O = ADP + phosphate + H(+). Functionally, involved in the final steps of cytoplasmic maturation of the 40S ribosomal subunit. In vitro, has strong ATPase activity and only low protein kinase activity. The chain is Serine/threonine-protein kinase RIO1 from Chaetomium thermophilum (strain DSM 1495 / CBS 144.50 / IMI 039719) (Thermochaetoides thermophila).